A 317-amino-acid polypeptide reads, in one-letter code: Melanocyte-stimulating hormone receptor (317 aa).

At 1–37 (MPMQEPQRRLLDPFNSTRTGTPHLKLSANQTGPWCLH) the chain is on the extracellular side. Residues Asn15 and Asn29 are each glycosylated (N-linked (GlcNAc...) asparagine). Residues 38-63 (VSIPDGLFLSLGLVSLVENVLVVISI) form a helical membrane-spanning segment. The Cytoplasmic segment spans residues 64 to 72 (AKNRNLHSP). Residues 73-93 (MYYFICCLALSDLLVSVSIVL) form a helical membrane-spanning segment. Residues 94-118 (ETTLILVLEAGALATRVTVVQQLDN) lie on the Extracellular side of the membrane. The helical transmembrane segment at 119–140 (VIDVLICGSMVSSLCFLGAIAV) threads the bilayer. At 141-163 (DRYISIFYALRYHSIVTLPRARW) the chain is on the cytoplasmic side. Residues 164 to 183 (AIVAIWVASISSSTLFVAYY) form a helical membrane-spanning segment. The Extracellular portion of the chain corresponds to 184-191 (NHTAVLLC). The chain crosses the membrane as a helical span at residues 192–211 (LVTFFLATLALMAVLYVHML). Residues 212–240 (ARAHQHAQAIAQLHKRQHLVHQGFRLKGA) lie on the Cytoplasmic side of the membrane. A helical transmembrane segment spans residues 241–266 (ATLTILLGIFFLCWGPFFLYLTLIVL). Residues 267–279 (CPKHPTCSCFFKN) lie on the Extracellular side of the membrane. The chain crosses the membrane as a helical span at residues 280–300 (LNLFLALIIFNSIVDPLIYAF). The Cytoplasmic portion of the chain corresponds to 301–317 (RSQELRMTLKEVLLCSW). Cys315 carries the S-palmitoyl cysteine lipid modification.

Belongs to the G-protein coupled receptor 1 family. As to quaternary structure, interacts with MGRN1, but does not undergo MGRN1-mediated ubiquitination; this interaction competes with GNAS-binding and thus inhibits agonist-induced cAMP production. Interacts with OPN3; the interaction results in a decrease in MC1R-mediated cAMP signaling and ultimately a decrease in melanin production in melanocytes.

It localises to the cell membrane. Functionally, receptor for MSH (alpha, beta and gamma) and ACTH. The activity of this receptor is mediated by G proteins which activate adenylate cyclase. Mediates melanogenesis, the production of eumelanin (black/brown) and phaeomelanin (red/yellow), via regulation of cAMP signaling in melanocytes. This Chaetodipus baileyi (Bailey's pocket mouse) protein is Melanocyte-stimulating hormone receptor (MC1R).